The chain runs to 359 residues: MALNSSAEDGIKRIQDDCPKAGRHSYIFVMIPTLYSIIFVVGIFGNSLVVIVIYFYMKLKTVASVFLLNLALADLCFLLTLPLWAVYTAMEYRWPFGNHLCKIASASVSFNLYASVFLLTCLSIDRYLAIVHPMKSRLRRTMLVAKVTCIIIWLMAGLASLPAVIHRNVYFIENTNITVCAFHYESRNSTLPIGLGLTKNILGFLFPFLIILTSYTLIWKALKKAYEIQKNKPRNDDIFRIIMAIVLFFFFSWVPHQIFTFLDVLIQLGVIHDCKISDIVDTAMPITICIAYFNNCLNPLFYGFLGKKFKKYFLQLLKYIPPKAKSHSSLSTKMSTLSYRPSDNMSSSAKKPASCFEVE.

Topologically, residues 1–25 (MALNSSAEDGIKRIQDDCPKAGRHS) are extracellular. Residue N4 is glycosylated (N-linked (GlcNAc...) asparagine). Angiotensin II is bound by residues Q15 and D17. 2 disulfides stabilise this stretch: C18/C274 and C101/C180. A helical transmembrane segment spans residues 26–55 (YIFVMIPTLYSIIFVVGIFGNSLVVIVIYF). The Cytoplasmic segment spans residues 56–61 (YMKLKT). A helical membrane pass occupies residues 62 to 89 (VASVFLLNLALADLCFLLTLPLWAVYTA). The Extracellular segment spans residues 90–98 (MEYRWPFGN). Residues 99-125 (HLCKIASASVSFNLYASVFLLTCLSID) traverse the membrane as a helical segment. Over 126-141 (RYLAIVHPMKSRLRRT) the chain is Cytoplasmic. The helical transmembrane segment at 142-165 (MLVAKVTCIIIWLMAGLASLPAVI) threads the bilayer. Residues 166–190 (HRNVYFIENTNITVCAFHYESRNST) are Extracellular-facing. Angiotensin II is bound at residue R167. The N-linked (GlcNAc...) asparagine glycan is linked to N176. 3 residues coordinate angiotensin II: F182, H183, and Y184. N188 carries an N-linked (GlcNAc...) asparagine glycan. Residues 191-216 (LPIGLGLTKNILGFLFPFLIILTSYT) traverse the membrane as a helical segment. K199 serves as a coordination point for angiotensin II. At 217-239 (LIWKALKKAYEIQKNKPRNDDIF) the chain is on the cytoplasmic side. The chain crosses the membrane as a helical span at residues 240–268 (RIIMAIVLFFFFSWVPHQIFTFLDVLIQL). Residues 269–278 (GVIHDCKISD) are Extracellular-facing. A helical membrane pass occupies residues 279–304 (IVDTAMPITICIAYFNNCLNPLFYGF). The Cytoplasmic portion of the chain corresponds to 305-359 (LGKKFKKYFLQLLKYIPPKAKSHSSLSTKMSTLSYRPSDNMSSSAKKPASCFEVE). Residues 337–349 (LSYRPSDNMSSSA) are compositionally biased toward polar residues. Residues 337–359 (LSYRPSDNMSSSAKKPASCFEVE) form a disordered region. A lipid anchor (S-palmitoyl cysteine) is attached at C355.

It belongs to the G-protein coupled receptor 1 family. In terms of assembly, interacts with MAS1. Interacts with ARRB1. Interacts with FLNA (via filamin repeat 21); increases PKA-mediated phosphorylation of FLNA. Post-translationally, C-terminal Ser or Thr residues may be phosphorylated. In terms of tissue distribution, is expressed in the liver, kidney, aorta, lung, uterus, ovary, spleen, heart, adrenal gland, and vascular smooth muscle cell.

The protein localises to the cell membrane. Functionally, receptor for angiotensin II, a vasoconstricting peptide, which acts as a key regulator of blood pressure and sodium retention by the kidney. The activated receptor in turn couples to G-alpha proteins G(q) (GNAQ, GNA11, GNA14 or GNA15) and thus activates phospholipase C and increases the cytosolic Ca(2+) concentrations, which in turn triggers cellular responses such as stimulation of protein kinase C. The chain is Type-1 angiotensin II receptor A (Agtr1) from Rattus norvegicus (Rat).